The sequence spans 364 residues: tRNA 2-selenouridine synthase (364 aa).

Residues 14–137 (LLADTPLIDV…LRQTAIQATW (124 aa)) form the Rhodanese domain. Residue cysteine 97 is the S-selanylcysteine intermediate of the active site. Glycine 149 contributes to the (2E)-geranyl diphosphate binding site.

This sequence belongs to the SelU family. In terms of assembly, monomer.

The enzyme catalyses 5-methylaminomethyl-2-thiouridine(34) in tRNA + selenophosphate + (2E)-geranyl diphosphate + H2O + H(+) = 5-methylaminomethyl-2-selenouridine(34) in tRNA + (2E)-thiogeraniol + phosphate + diphosphate. It carries out the reaction 5-methylaminomethyl-2-thiouridine(34) in tRNA + (2E)-geranyl diphosphate = 5-methylaminomethyl-S-(2E)-geranyl-thiouridine(34) in tRNA + diphosphate. The catalysed reaction is 5-methylaminomethyl-S-(2E)-geranyl-thiouridine(34) in tRNA + selenophosphate + H(+) = 5-methylaminomethyl-2-(Se-phospho)selenouridine(34) in tRNA + (2E)-thiogeraniol. It catalyses the reaction 5-methylaminomethyl-2-(Se-phospho)selenouridine(34) in tRNA + H2O = 5-methylaminomethyl-2-selenouridine(34) in tRNA + phosphate. Its function is as follows. Involved in the post-transcriptional modification of the uridine at the wobble position (U34) of tRNA(Lys), tRNA(Glu) and tRNA(Gln). Catalyzes the conversion of 2-thiouridine (S2U-RNA) to 2-selenouridine (Se2U-RNA). Acts in a two-step process involving geranylation of 2-thiouridine (S2U) to S-geranyl-2-thiouridine (geS2U) and subsequent selenation of the latter derivative to 2-selenouridine (Se2U) in the tRNA chain. The chain is tRNA 2-selenouridine synthase from Salmonella typhimurium (strain LT2 / SGSC1412 / ATCC 700720).